The chain runs to 485 residues: Glutamyl-tRNA(Gln) amidotransferase subunit A (485 aa).

Active-site charge relay system residues include Lys-78 and Ser-153. Residue Ser-177 is the Acyl-ester intermediate of the active site.

This sequence belongs to the amidase family. GatA subfamily. Heterotrimer of A, B and C subunits.

The enzyme catalyses L-glutamyl-tRNA(Gln) + L-glutamine + ATP + H2O = L-glutaminyl-tRNA(Gln) + L-glutamate + ADP + phosphate + H(+). In terms of biological role, allows the formation of correctly charged Gln-tRNA(Gln) through the transamidation of misacylated Glu-tRNA(Gln) in organisms which lack glutaminyl-tRNA synthetase. The reaction takes place in the presence of glutamine and ATP through an activated gamma-phospho-Glu-tRNA(Gln). This is Glutamyl-tRNA(Gln) amidotransferase subunit A from Geobacter sp. (strain M21).